The chain runs to 172 residues: Translationally-controlled tumor protein homolog (172 aa).

One can recognise a TCTP domain in the interval M1–C172.

It belongs to the TCTP family.

It localises to the cytoplasm. In terms of biological role, involved in calcium binding and microtubule stabilization. This Xenopus laevis (African clawed frog) protein is Translationally-controlled tumor protein homolog (tpt1).